A 448-amino-acid polypeptide reads, in one-letter code: Methylenetetrahydrofolate--tRNA-(uracil-5-)-methyltransferase TrmFO (448 aa).

Position 13–18 (13–18) interacts with FAD; that stretch reads GAGLAG.

Belongs to the MnmG family. TrmFO subfamily. FAD serves as cofactor.

It is found in the cytoplasm. It catalyses the reaction uridine(54) in tRNA + (6R)-5,10-methylene-5,6,7,8-tetrahydrofolate + NADH + H(+) = 5-methyluridine(54) in tRNA + (6S)-5,6,7,8-tetrahydrofolate + NAD(+). It carries out the reaction uridine(54) in tRNA + (6R)-5,10-methylene-5,6,7,8-tetrahydrofolate + NADPH + H(+) = 5-methyluridine(54) in tRNA + (6S)-5,6,7,8-tetrahydrofolate + NADP(+). In terms of biological role, catalyzes the folate-dependent formation of 5-methyl-uridine at position 54 (M-5-U54) in all tRNAs. This Streptococcus pyogenes serotype M12 (strain MGAS2096) protein is Methylenetetrahydrofolate--tRNA-(uracil-5-)-methyltransferase TrmFO.